The following is a 396-amino-acid chain: NADH-quinone oxidoreductase subunit D 1 (396 aa).

This sequence belongs to the complex I 49 kDa subunit family. As to quaternary structure, NDH-1 is composed of 14 different subunits. Subunits NuoB, C, D, E, F, and G constitute the peripheral sector of the complex.

The protein localises to the cell inner membrane. The catalysed reaction is a quinone + NADH + 5 H(+)(in) = a quinol + NAD(+) + 4 H(+)(out). Its function is as follows. NDH-1 shuttles electrons from NADH, via FMN and iron-sulfur (Fe-S) centers, to quinones in the respiratory chain. The immediate electron acceptor for the enzyme in this species is believed to be ubiquinone. Couples the redox reaction to proton translocation (for every two electrons transferred, four hydrogen ions are translocated across the cytoplasmic membrane), and thus conserves the redox energy in a proton gradient. In Rhizobium etli (strain CIAT 652), this protein is NADH-quinone oxidoreductase subunit D 1.